The sequence spans 435 residues: AP-2 complex subunit mu (435 aa).

Phosphoserine is present on serine 45. A Phosphothreonine modification is found at threonine 156. An MHD domain is found at 170 to 434; the sequence is RNELFLDVLE…IGRSGIYETR (265 aa). Residues lysine 341, lysine 345, and lysine 354 each coordinate a 1,2-diacyl-sn-glycero-3-phospho-(1D-myo-inositol-3,4,5-trisphosphate).

Belongs to the adaptor complexes medium subunit family. As to quaternary structure, adaptor protein complex 2 (AP-2) is a heterotetramer composed of two large adaptins (alpha-type subunit AP2A1 or AP2A2 and beta-type subunit AP2B1), a medium adaptin (mu-type subunit AP2M1) and a small adaptin (sigma-type subunit AP2S1). Interacts with ATP6V1H and MEGF10. Interacts with EGFR and TTGN1. Interacts with F2R. Interacts with PIP5K1C; tyrosine phosphorylation of PIP5K1C weakens the interaction. Interacts with KIAA0319; required for clathrin-mediated endocytosis of KIAA0319. Interacts with DVL2 (via DEP domain). Interacts with KCNQ1; mediates estrogen-induced internalization via clathrin-coated vesicles. Interacts with P2RX4 (via internalization motif). Together with AP2A1 or AP2A2 and AP2B1, it interacts with ADAM10; this interaction facilitates ADAM10 endocytosis from the plasma membrane during long-term potentiation in hippocampal neurons. Probably interacts with ACE2 (via endocytic sorting signal motif); the interaction is inhibited by ACE2 phosphorylation. Interacts with RALBP1; the interaction is direct. Interacts with TMEM106B (via N-terminus). Phosphorylation at Thr-156 increases the affinity of the AP-2 complex for cargo membrane proteins during the initial stages of endocytosis.

It localises to the cell membrane. The protein localises to the membrane. Its subcellular location is the coated pit. Its function is as follows. Component of the adaptor protein complex 2 (AP-2). Adaptor protein complexes function in protein transport via transport vesicles in different membrane traffic pathways. Adaptor protein complexes are vesicle coat components and appear to be involved in cargo selection and vesicle formation. AP-2 is involved in clathrin-dependent endocytosis in which cargo proteins are incorporated into vesicles surrounded by clathrin (clathrin-coated vesicles, CCVs) which are destined for fusion with the early endosome. The clathrin lattice serves as a mechanical scaffold but is itself unable to bind directly to membrane components. Clathrin-associated adaptor protein (AP) complexes which can bind directly to both the clathrin lattice and to the lipid and protein components of membranes are considered to be the major clathrin adaptors contributing the CCV formation. AP-2 also serves as a cargo receptor to selectively sort the membrane proteins involved in receptor-mediated endocytosis. AP-2 seems to play a role in the recycling of synaptic vesicle membranes from the presynaptic surface. AP-2 recognizes Y-X-X-[FILMV] (Y-X-X-Phi) and [ED]-X-X-X-L-[LI] endocytosis signal motifs within the cytosolic tails of transmembrane cargo molecules. AP-2 may also play a role in maintaining normal post-endocytic trafficking through the ARF6-regulated, non-clathrin pathway. During long-term potentiation in hippocampal neurons, AP-2 is responsible for the endocytosis of ADAM10. The AP-2 mu subunit binds to transmembrane cargo proteins; it recognizes the Y-X-X-Phi motifs. The surface region interacting with to the Y-X-X-Phi motif is inaccessible in cytosolic AP-2, but becomes accessible through a conformational change following phosphorylation of AP-2 mu subunit at Thr-156 in membrane-associated AP-2. The membrane-specific phosphorylation event appears to involve assembled clathrin which activates the AP-2 mu kinase AAK1. Plays a role in endocytosis of frizzled family members upon Wnt signaling. This chain is AP-2 complex subunit mu (AP2M1), found in Bos taurus (Bovine).